A 266-amino-acid chain; its full sequence is Small ribosomal subunit protein uS3 (266 aa).

Positions 39–107 (VREYLKKKLK…PVHVNIEEIR (69 aa)) constitute a KH type-2 domain. A disordered region spans residues 214–266 (PVVEEVTEDKRPRRNARPGDRRPRRDGEGGAPGARRGGPRRGAGKPEDGKTGE). 2 stretches are compositionally biased toward basic and acidic residues: residues 230 to 241 (RPGDRRPRRDGE) and 257 to 266 (GKPEDGKTGE).

It belongs to the universal ribosomal protein uS3 family. In terms of assembly, part of the 30S ribosomal subunit. Forms a tight complex with proteins S10 and S14.

Its function is as follows. Binds the lower part of the 30S subunit head. Binds mRNA in the 70S ribosome, positioning it for translation. The sequence is that of Small ribosomal subunit protein uS3 from Burkholderia thailandensis (strain ATCC 700388 / DSM 13276 / CCUG 48851 / CIP 106301 / E264).